The chain runs to 131 residues: Small ribosomal subunit protein uS8 (131 aa).

The protein belongs to the universal ribosomal protein uS8 family. As to quaternary structure, part of the 30S ribosomal subunit. Contacts proteins S5 and S12.

In terms of biological role, one of the primary rRNA binding proteins, it binds directly to 16S rRNA central domain where it helps coordinate assembly of the platform of the 30S subunit. This chain is Small ribosomal subunit protein uS8, found in Dictyoglomus thermophilum (strain ATCC 35947 / DSM 3960 / H-6-12).